The chain runs to 295 residues: AP-1-like transcription factor YAP4 (295 aa).

A phosphoserine mark is found at serine 85, serine 89, and serine 196. The segment covering 181–202 (ASYFPSNSTPATRKNSATTNLP) has biased composition (polar residues). A disordered region spans residues 181 to 205 (ASYFPSNSTPATRKNSATTNLPSEE). The bZIP domain occupies 237–295 (PLRNTKRAAQNRSAQKAFRQRREKYIKNLEEKSKLFDGLMKENSELKKMIESLKSKLKE). The tract at residues 239–260 (RNTKRAAQNRSAQKAFRQRREK) is basic motif. Residues 262–271 (IKNLEEKSKL) form a leucine-zipper region.

The protein belongs to the bZIP family. YAP subfamily. As to quaternary structure, homodimer.

It localises to the cytoplasm. The protein localises to the nucleus. Functionally, transcription activator involved in the regulation of genes expressed in response to environmental changes and metabolic requirements. According to genome-wide promoter binding and gene expression studies it regulates, among others, genes involved in ribosome biogenesis, and protein synthesis. It may also be involved in pleiotropic drug resistance. When overexpressed it confers increased resistance to cisplatin, the DNA-alkylating agents methylmethanosulfonate, and mitomycin C, the antimalarial drugs quinidine, mefloquine, and chloroquine, and increases cellular tolerance to sodium and lithium. Preferentially binds 5'-TTACTAA-3'. This chain is AP-1-like transcription factor YAP4 (CIN5), found in Saccharomyces cerevisiae (strain ATCC 204508 / S288c) (Baker's yeast).